We begin with the raw amino-acid sequence, 586 residues long: Laccase-9 (586 aa).

A signal peptide spans 1 to 25 (MPRVHHSLSNQAFLVLLLFSSIASA). 2 Plastocyanin-like domains span residues 33–149 (HVKD…PRSG) and 159–307 (KEVP…YEGA). N-linked (GlcNAc...) asparagine glycans are attached at residues Asn52, Asn74, and Asn79. Cu cation-binding residues include His83 and His85. Asn111 carries N-linked (GlcNAc...) asparagine glycosylation. Cu cation is bound by residues His128 and His130. N-linked (GlcNAc...) asparagine glycans are attached at residues Asn236, Asn333, Asn385, Asn403, and Asn451. One can recognise a Plastocyanin-like 3 domain in the interval 411–552 (DFPDQPPLKF…MMAFIVQNGP (142 aa)). His469, His472, His474, His531, Cys532, His533, and His537 together coordinate Cu cation.

The protein belongs to the multicopper oxidase family. Cu cation serves as cofactor. In terms of tissue distribution, predominantly expressed in roots.

Its subcellular location is the secreted. It localises to the extracellular space. The protein localises to the apoplast. It carries out the reaction 4 hydroquinone + O2 = 4 benzosemiquinone + 2 H2O. Its function is as follows. Lignin degradation and detoxification of lignin-derived products. The protein is Laccase-9 (LAC9) of Arabidopsis thaliana (Mouse-ear cress).